Here is a 301-residue protein sequence, read N- to C-terminus: tRNA-cytidine(32) 2-sulfurtransferase (301 aa).

The short motif at 55-60 is the PP-loop motif element; it reads SGGKDS. [4Fe-4S] cluster-binding residues include cysteine 130, cysteine 133, and cysteine 221.

This sequence belongs to the TtcA family. In terms of assembly, homodimer. It depends on Mg(2+) as a cofactor. Requires [4Fe-4S] cluster as cofactor.

Its subcellular location is the cytoplasm. It carries out the reaction cytidine(32) in tRNA + S-sulfanyl-L-cysteinyl-[cysteine desulfurase] + AH2 + ATP = 2-thiocytidine(32) in tRNA + L-cysteinyl-[cysteine desulfurase] + A + AMP + diphosphate + H(+). The protein operates within tRNA modification. Its function is as follows. Catalyzes the ATP-dependent 2-thiolation of cytidine in position 32 of tRNA, to form 2-thiocytidine (s(2)C32). The sulfur atoms are provided by the cysteine/cysteine desulfurase (IscS) system. In Acinetobacter baumannii (strain SDF), this protein is tRNA-cytidine(32) 2-sulfurtransferase.